A 422-amino-acid chain; its full sequence is Replication factor C large subunit (422 aa).

An ATP-binding site is contributed by 63 to 70 (GPPGIGKT).

This sequence belongs to the activator 1 small subunits family. RfcL subfamily. In terms of assembly, heteromultimer composed of small subunits (RfcS) and large subunits (RfcL).

Its function is as follows. Part of the RFC clamp loader complex which loads the PCNA sliding clamp onto DNA. This Pyrobaculum neutrophilum (strain DSM 2338 / JCM 9278 / NBRC 100436 / V24Sta) (Thermoproteus neutrophilus) protein is Replication factor C large subunit.